The primary structure comprises 211 residues: FMN-dependent NADH:quinone oxidoreductase 2 (211 aa).

FMN contacts are provided by residues S10 and 17-19; that span reads SRS.

Belongs to the azoreductase type 1 family. As to quaternary structure, homodimer. The cofactor is FMN.

The catalysed reaction is 2 a quinone + NADH + H(+) = 2 a 1,4-benzosemiquinone + NAD(+). It catalyses the reaction N,N-dimethyl-1,4-phenylenediamine + anthranilate + 2 NAD(+) = 2-(4-dimethylaminophenyl)diazenylbenzoate + 2 NADH + 2 H(+). Quinone reductase that provides resistance to thiol-specific stress caused by electrophilic quinones. Functionally, also exhibits azoreductase activity. Catalyzes the reductive cleavage of the azo bond in aromatic azo compounds to the corresponding amines. This is FMN-dependent NADH:quinone oxidoreductase 2 from Listeria innocua serovar 6a (strain ATCC BAA-680 / CLIP 11262).